A 348-amino-acid chain; its full sequence is Protein RecA (348 aa).

69–76 (GPESSGKT) provides a ligand contact to ATP.

This sequence belongs to the RecA family.

The protein resides in the cytoplasm. Can catalyze the hydrolysis of ATP in the presence of single-stranded DNA, the ATP-dependent uptake of single-stranded DNA by duplex DNA, and the ATP-dependent hybridization of homologous single-stranded DNAs. It interacts with LexA causing its activation and leading to its autocatalytic cleavage. The chain is Protein RecA from Picosynechococcus sp. (strain ATCC 27264 / PCC 7002 / PR-6) (Agmenellum quadruplicatum).